The primary structure comprises 267 residues: MTTRIAIVGAAGRMGRMLIEAVGEADGAELVAAVDRPGSDFVGADAGELAGIGRLGLAVGDDLEAALAAADVLIDFTLPEATGGVLQACRTTGTALVIGTTGLGEAQLAALDAAAGEIPLVFAPNYSTGVNLTLKLAELAARALGDSVDIEIIEAHHRHKVDAPSGTALALGQRVADTLGRDLKQCAVYGREGRTGERDRQTIGFETIRAGDIVGEHTVLYAGAGERIEITHRASNRMTFAAGAVRAAQWVAGREPGRYDMQDVLGL.

NAD(+) contacts are provided by residues 9-14 (GAAGRM) and Asp35. Residue Arg36 participates in NADP(+) binding. Residues 99–101 (GTT) and 123–126 (APNY) each bind NAD(+). His156 serves as the catalytic Proton donor/acceptor. His157 contacts (S)-2,3,4,5-tetrahydrodipicolinate. The active-site Proton donor is the Lys160. 166-167 (GT) is a binding site for (S)-2,3,4,5-tetrahydrodipicolinate.

Belongs to the DapB family.

The protein localises to the cytoplasm. The catalysed reaction is (S)-2,3,4,5-tetrahydrodipicolinate + NAD(+) + H2O = (2S,4S)-4-hydroxy-2,3,4,5-tetrahydrodipicolinate + NADH + H(+). It carries out the reaction (S)-2,3,4,5-tetrahydrodipicolinate + NADP(+) + H2O = (2S,4S)-4-hydroxy-2,3,4,5-tetrahydrodipicolinate + NADPH + H(+). It participates in amino-acid biosynthesis; L-lysine biosynthesis via DAP pathway; (S)-tetrahydrodipicolinate from L-aspartate: step 4/4. Catalyzes the conversion of 4-hydroxy-tetrahydrodipicolinate (HTPA) to tetrahydrodipicolinate. The chain is 4-hydroxy-tetrahydrodipicolinate reductase from Alkalilimnicola ehrlichii (strain ATCC BAA-1101 / DSM 17681 / MLHE-1).